A 108-amino-acid polypeptide reads, in one-letter code: uncharacterized protein (108 aa).

The chain crosses the membrane as a helical span at residues 7–27 (FIPMLLVANAAPYFFYPIFML).

To N.crassa NCU05373.1.

It is found in the membrane. This is an uncharacterized protein from Schizosaccharomyces pombe (strain 972 / ATCC 24843) (Fission yeast).